We begin with the raw amino-acid sequence, 189 residues long: MAERGSDIRPGHILEHNNALYLVVKVMHTQPGKGGAYIQAEMKNLKTGAKQYERFRTDGDIKRAIVDESDYQYIYGDGSMITVMHLKTYEQITISKDILGDKSIYLQDNIVITLVFYNGEIISAKVPDYVTLRVIETEAVIKGQTVSSSSYKVAMLENNQRISVPTFIKPGDKIVVYTPDDSYYERAKG.

The protein belongs to the elongation factor P family.

It is found in the cytoplasm. Its pathway is protein biosynthesis; polypeptide chain elongation. Involved in peptide bond synthesis. Stimulates efficient translation and peptide-bond synthesis on native or reconstituted 70S ribosomes in vitro. Probably functions indirectly by altering the affinity of the ribosome for aminoacyl-tRNA, thus increasing their reactivity as acceptors for peptidyl transferase. The sequence is that of Elongation factor P from Ehrlichia canis (strain Jake).